Here is a 319-residue protein sequence, read N- to C-terminus: Dehydrogenase/reductase SDR family member 9 (319 aa).

The signal sequence occupies residues 1–20 (MLFWLLALLFLCAFLWNYKG). NAD(+) is bound by residues 34 to 58 (ITGC…RVIA) and Asp-83. Residue Ser-164 coordinates substrate. The active-site Proton acceptor is the Tyr-176. NAD(+) is bound at residue Lys-180.

Belongs to the short-chain dehydrogenases/reductases (SDR) family. As to quaternary structure, homotetramer.

It localises to the microsome membrane. Its subcellular location is the endoplasmic reticulum membrane. It carries out the reaction 3beta-hydroxy-5alpha-pregnane-20-one + NAD(+) = 5alpha-pregnane-3,20-dione + NADH + H(+). The enzyme catalyses 17beta-hydroxy-5alpha-androstan-3-one + NAD(+) = 5alpha-androstan-3,17-dione + NADH + H(+). The catalysed reaction is androsterone + NAD(+) = 5alpha-androstan-3,17-dione + NADH + H(+). It catalyses the reaction 5alpha-androstane-3alpha,17beta-diol + NAD(+) = 17beta-hydroxy-5alpha-androstan-3-one + NADH + H(+). It carries out the reaction all-trans-retinol + NAD(+) = all-trans-retinal + NADH + H(+). The enzyme catalyses 3alpha-hydroxy-5alpha-pregnan-20-one + NAD(+) = 5alpha-pregnane-3,20-dione + NADH + H(+). 3-alpha-hydroxysteroid dehydrogenase that converts 3-alpha-tetrahydroprogesterone (allopregnanolone) to dihydroxyprogesterone and 3-alpha-androstanediol to dihydroxyprogesterone. Also plays a role in the biosynthesis of retinoic acid. Can utilize both NADH and NADPH. This chain is Dehydrogenase/reductase SDR family member 9 (Dhrs9), found in Mus musculus (Mouse).